Here is a 34-residue protein sequence, read N- to C-terminus: Mu-conotoxin GS (34 aa).

Intrachain disulfides connect Cys2-Cys14, Cys9-Cys19, and Cys13-Cys27. Pro10 and Pro11 each carry 4-hydroxyproline. Glu32 is modified (4-carboxyglutamate).

Expressed by the venom duct.

Its subcellular location is the secreted. Mu-conotoxins block voltage-gated sodium channels (Nav). No effect was observed upon injections into mice and goldfish (25 ug). The sequence is that of Mu-conotoxin GS from Conus geographus (Geography cone).